The following is a 134-amino-acid chain: Profilin (134 aa).

The protein belongs to the profilin family. As to quaternary structure, occurs in many kinds of cells as a complex with monomeric actin in a 1:1 ratio.

Its subcellular location is the cytoplasm. It localises to the cytoskeleton. Binds to actin and affects the structure of the cytoskeleton. At high concentrations, profilin prevents the polymerization of actin, whereas it enhances it at low concentrations. By binding to PIP2, it inhibits the formation of IP3 and DG. In Apium graveolens (Celery), this protein is Profilin.